An 874-amino-acid chain; its full sequence is Alanine--tRNA ligase (874 aa).

Residues His-563, His-567, Cys-665, and His-669 each contribute to the Zn(2+) site.

This sequence belongs to the class-II aminoacyl-tRNA synthetase family. It depends on Zn(2+) as a cofactor.

The protein localises to the cytoplasm. The enzyme catalyses tRNA(Ala) + L-alanine + ATP = L-alanyl-tRNA(Ala) + AMP + diphosphate. Its function is as follows. Catalyzes the attachment of alanine to tRNA(Ala) in a two-step reaction: alanine is first activated by ATP to form Ala-AMP and then transferred to the acceptor end of tRNA(Ala). Also edits incorrectly charged Ser-tRNA(Ala) and Gly-tRNA(Ala) via its editing domain. The chain is Alanine--tRNA ligase from Actinobacillus pleuropneumoniae serotype 5b (strain L20).